The sequence spans 386 residues: Cytochrome b (386 aa).

The next 4 membrane-spanning stretches (helical) occupy residues 32-52 (FGSLLALCLGIQIVTGVTLAM), 76-98 (WMIRYLHANTASFFFLFVYLHIG), 113-133 (PWSIGVIILILMMATAFLGYV), and 179-199 (FFSLHYLLPFILAALAVMHLL). Residues His82 and His96 each coordinate heme b. The heme b site is built by His183 and His197. Position 202 (His202) interacts with a ubiquinone. The next 4 membrane-spanning stretches (helical) occupy residues 225-245 (YTFKDLVTIFLFFLVLALFLF), 289-309 (LGGVIAMFGSLLILLAMPLLD), 321-341 (LMKFFFWLLVVDFLILLWCGS), and 348-368 (FITLGQFATTFYFSWFLIIVP).

This sequence belongs to the cytochrome b family. As to quaternary structure, fungal cytochrome b-c1 complex contains 10 subunits; 3 respiratory subunits, 2 core proteins and 5 low-molecular weight proteins. Cytochrome b-c1 complex is a homodimer. Heme b is required as a cofactor.

It is found in the mitochondrion inner membrane. Functionally, component of the ubiquinol-cytochrome c reductase complex (complex III or cytochrome b-c1 complex) that is part of the mitochondrial respiratory chain. The b-c1 complex mediates electron transfer from ubiquinol to cytochrome c. Contributes to the generation of a proton gradient across the mitochondrial membrane that is then used for ATP synthesis. In Rhizopus oryzae (Mucormycosis agent), this protein is Cytochrome b (cob).